Consider the following 346-residue polypeptide: Methylthioribose-1-phosphate isomerase (346 aa).

Residues 46–48 (RGA), Arg-89, and Gln-196 each bind substrate. Asp-237 serves as the catalytic Proton donor. 247-248 (NK) is a binding site for substrate.

It belongs to the eIF-2B alpha/beta/delta subunits family. MtnA subfamily.

The enzyme catalyses 5-(methylsulfanyl)-alpha-D-ribose 1-phosphate = 5-(methylsulfanyl)-D-ribulose 1-phosphate. It functions in the pathway amino-acid biosynthesis; L-methionine biosynthesis via salvage pathway; L-methionine from S-methyl-5-thio-alpha-D-ribose 1-phosphate: step 1/6. Functionally, catalyzes the interconversion of methylthioribose-1-phosphate (MTR-1-P) into methylthioribulose-1-phosphate (MTRu-1-P). The polypeptide is Methylthioribose-1-phosphate isomerase (Geobacter sulfurreducens (strain ATCC 51573 / DSM 12127 / PCA)).